The chain runs to 82 residues: MSILGVSIECKKSSTLLTFLTVRKMTRVFNKFPDMAYYRGDCLKAVYVTMTYKNTKTGETDYTYLSNGGCLHTIVMGSMVDY.

The chain is Protein C14 from Homo sapiens (Human).